Here is a 481-residue protein sequence, read N- to C-terminus: E3 ubiquitin-protein ligase makorin-1 (481 aa).

C3H1-type zinc fingers lie at residues 55–82 (WTKQ…HDLS), 84–111 (SPYG…HSKP), and 208–235 (ETKK…HGDS). Residues 236–263 (CDMCGLQVLHPVDAAQRSQHIKSCIEAH) are makorin-type Cys-His. The RING-type zinc finger occupies 281–335 (CGICMEVVYEKANPSERRFGILSNCNHTYCLKCIRKWRSAKQFESKIIKSCPECR). The segment at 364–393 (AMSNKACRYFDEGRGSCPFGGNCFYKHAYP) adopts a C3H1-type 4 zinc-finger fold.

Interacts with p53/TP53 and CDKN1A. Interacts with TERT, modulating telomere length homeostasis. Post-translationally, auto-ubiquitinated; which leads to proteasomal degradation. In terms of tissue distribution, highly expressed in embryo, in specific cell types of the central nervous system, in brain with the strongest levels of expression in the mantle layers and in testis. Moderate to low levels in somatic tissues.

The catalysed reaction is S-ubiquitinyl-[E2 ubiquitin-conjugating enzyme]-L-cysteine + [acceptor protein]-L-lysine = [E2 ubiquitin-conjugating enzyme]-L-cysteine + N(6)-ubiquitinyl-[acceptor protein]-L-lysine.. Its pathway is protein modification; protein ubiquitination. Its function is as follows. E3 ubiquitin ligase catalyzing the covalent attachment of ubiquitin moieties onto substrate proteins. These substrates include FILIP1, p53/TP53, CDKN1A and TERT. Keeps cells alive by suppressing p53/TP53 under normal conditions, but stimulates apoptosis by repressing CDKN1A under stress conditions. Acts as a negative regulator of telomerase. Has negative and positive effects on RNA polymerase II-dependent transcription. The polypeptide is E3 ubiquitin-protein ligase makorin-1 (Mkrn1) (Mus musculus (Mouse)).